The chain runs to 164 residues: N5-carboxyaminoimidazole ribonucleotide mutase (164 aa).

Ser-13, Asp-16, and Arg-43 together coordinate substrate.

It belongs to the AIR carboxylase family. Class I subfamily.

The enzyme catalyses 5-carboxyamino-1-(5-phospho-D-ribosyl)imidazole + H(+) = 5-amino-1-(5-phospho-D-ribosyl)imidazole-4-carboxylate. Its pathway is purine metabolism; IMP biosynthesis via de novo pathway; 5-amino-1-(5-phospho-D-ribosyl)imidazole-4-carboxylate from 5-amino-1-(5-phospho-D-ribosyl)imidazole (N5-CAIR route): step 2/2. Catalyzes the conversion of N5-carboxyaminoimidazole ribonucleotide (N5-CAIR) to 4-carboxy-5-aminoimidazole ribonucleotide (CAIR). This Haemophilus influenzae (strain ATCC 51907 / DSM 11121 / KW20 / Rd) protein is N5-carboxyaminoimidazole ribonucleotide mutase.